A 570-amino-acid polypeptide reads, in one-letter code: Interleukin-1 receptor accessory protein (570 aa).

A signal peptide spans 1–20 (MTLLWCVVSLYFYGILQSDA). 3 Ig-like C2-type domains span residues 21–128 (SERC…VAFP), 141–230 (PMKL…RTLT), and 242–348 (PPVI…AKVK). At 21 to 367 (SERCDDWGLD…VELACGFGAT (347 aa)) the chain is on the extracellular side. Intrachain disulfides connect cysteine 24–cysteine 122, cysteine 47–cysteine 114, cysteine 137–cysteine 181, cysteine 160–cysteine 212, and cysteine 266–cysteine 332. Residue asparagine 57 is glycosylated (N-linked (GlcNAc...) asparagine). The segment at 69–85 (IWYWTRQDRDLEEPINF) is essential for interaction with PTPRD. Asparagine 107, asparagine 111, and asparagine 118 each carry an N-linked (GlcNAc...) asparagine glycan. 3 N-linked (GlcNAc...) asparagine glycosylation sites follow: asparagine 196, asparagine 209, and asparagine 299. A helical transmembrane segment spans residues 368 to 388 (VLLVVILIVVYHVYWLEMVLF). At 389 to 570 (YRAHFGTDET…GLSYSSLKNV (182 aa)) the chain is on the cytoplasmic side. Residues 403 to 546 (KEYDIYVSYA…RFWKQLQVAM (144 aa)) form the TIR domain. Residue glutamate 482 is part of the active site. The segment at 549-570 (KKSPRRSSSDEQGLSYSSLKNV) is disordered. Position 557 is a phosphoserine (serine 557). The segment covering 558 to 570 (DEQGLSYSSLKNV) has biased composition (polar residues).

It belongs to the interleukin-1 receptor family. The interleukin-36 receptor complex is a heterodimer of IL1RL2 and IL1RAP; the association is inhibited by IL36RN. The interleukin-1 receptor complex is a heterodimer of IL1R1 and IL1RAP. Associates with IL1R2 to form a non-signaling interleukin-1 receptor complex. Isoform 4 interacts with IL1R1 in an interleukin-1-dependent manner. Interacts with IL-33-bound IL1RL1 to form the minimal interleukin-33 signaling complex with a 1:1:1 stoichiometry. Interacts with KIT (independently of stimulation with KITLG/SCF). A mast cell-specific KITLG/SCF-induced interleukin-33 signaling complex contains IL1RL1, IL1RAP, KIT and MYD88. Interacts (via the first immunoglobilin domain) with PTPRD (via the third immunoglobilin domain); induces pre- and postsynaptic differentiation of neurons. As to expression, detected in liver, skin, placenta, thymus and lung. Isoform 4 is predominantly expressed in brain. Overexpressed on candidate chronic myeloid leukemia (CML) stem cells, hematopoietic stem cells and mononuclear cells of patients with acute myeloid leukemia (AML). Overexpressed in patients with chronic obstructive pulmonary disease (COPD). Expressed in T-helper 1 (Th1) and T-helper 2 (Th2) cell subsets.

The protein localises to the cell membrane. The protein resides in the secreted. It catalyses the reaction NAD(+) + H2O = ADP-D-ribose + nicotinamide + H(+). Its function is as follows. Coreceptor for IL1RL2 in the IL-36 signaling system. Coreceptor with IL1R1 in the IL-1 signaling system. Associates with IL1R1 bound to IL1B to form the high affinity interleukin-1 receptor complex which mediates interleukin-1-dependent activation of NF-kappa-B and other pathways. Signaling involves the recruitment of adapter molecules such as TOLLIP, MYD88, and IRAK1 or IRAK2 via the respective TIR domains of the receptor/coreceptor subunits. Recruits TOLLIP to the signaling complex. Does not bind to interleukin-1 alone; binding of IL1RN to IL1R1, prevents its association with IL1R1 to form a signaling complex. The cellular response is modulated through a non-signaling association with the membrane IL1R2 decoy receptor. Coreceptor for IL1RL1 in the IL-33 signaling system. Can bidirectionally induce pre- and postsynaptic differentiation of neurons by trans-synaptically binding to PTPRD. May play a role in IL1B-mediated costimulation of IFNG production from T-helper 1 (Th1) cells. In terms of biological role, associates with secreted ligand-bound IL1R2 and increases the affinity of secreted IL1R2 for IL1B; this complex formation may be the dominant mechanism for neutralization of IL1B by secreted/soluble receptors. Enhances the ability of secreted IL1R1 to inhibit IL-33 signaling. Functionally, unable to mediate canonical IL-1 signaling. Required for Src phosphorylation by IL1B. May be involved in IL1B-potentiated NMDA-induced calcium influx in neurons. The protein is Interleukin-1 receptor accessory protein (IL1RAP) of Homo sapiens (Human).